Here is a 132-residue protein sequence, read N- to C-terminus: UPF0299 membrane protein YohJ (132 aa).

4 consecutive transmembrane segments (helical) span residues 7–27 (IIWQ…AGIF), 31–51 (LLPV…VLLA), 63–83 (GCYV…VGVM), and 93–113 (FGPV…VVSW).

It belongs to the UPF0299 family.

It localises to the cell inner membrane. This is UPF0299 membrane protein YohJ from Shigella boydii serotype 4 (strain Sb227).